The chain runs to 306 residues: Galactosylgalactosylxylosylprotein 3-beta-glucuronosyltransferase I (306 aa).

Residues 1–11 (MSEVRIRPRQV) are Cytoplasmic-facing. The chain crosses the membrane as a helical; Signal-anchor for type II membrane protein span at residues 12–29 (LILIIVFLVVLMMVHRNG). The Lumenal portion of the chain corresponds to 30–306 (KRTCQGPEYL…GQRSDGGMEV (277 aa)). A glycan (N-linked (GlcNAc...) asparagine) is linked at Asn-90. Residue Asp-163 coordinates Mn(2+). Residue Glu-252 is the Proton acceptor of the active site.

This sequence belongs to the glycosyltransferase 43 family. Mn(2+) serves as cofactor.

The protein resides in the golgi apparatus membrane. The catalysed reaction is 3-O-(beta-D-galactosyl-(1-&gt;3)-beta-D-galactosyl-(1-&gt;4)-beta-D-xylosyl)-L-seryl-[protein] + UDP-alpha-D-glucuronate = 3-O-(beta-D-GlcA-(1-&gt;3)-beta-D-Gal-(1-&gt;3)-beta-D-Gal-(1-&gt;4)-beta-D-Xyl)-L-seryl-[protein] + UDP + H(+). It participates in protein modification; protein glycosylation. Functionally, involved in the biosynthesis of L2/HNK-1 carbohydrate epitope on both glycolipids and glycoproteins. Shows strict specificity for Gal-beta-1,3-Gal-beta-1,4-Xyl, exhibiting negligible incorporation into other galactoside substrates. This chain is Galactosylgalactosylxylosylprotein 3-beta-glucuronosyltransferase I (GlcAT-I), found in Drosophila melanogaster (Fruit fly).